The sequence spans 310 residues: Ribosomal RNA small subunit methyltransferase H (310 aa).

S-adenosyl-L-methionine contacts are provided by residues 32–34, D52, F79, D100, and Q107; that span reads AGH.

This sequence belongs to the methyltransferase superfamily. RsmH family.

It localises to the cytoplasm. The catalysed reaction is cytidine(1402) in 16S rRNA + S-adenosyl-L-methionine = N(4)-methylcytidine(1402) in 16S rRNA + S-adenosyl-L-homocysteine + H(+). Its function is as follows. Specifically methylates the N4 position of cytidine in position 1402 (C1402) of 16S rRNA. This chain is Ribosomal RNA small subunit methyltransferase H, found in Halalkalibacterium halodurans (strain ATCC BAA-125 / DSM 18197 / FERM 7344 / JCM 9153 / C-125) (Bacillus halodurans).